Consider the following 196-residue polypeptide: GTP cyclohydrolase 1 (196 aa).

Zn(2+) is bound by residues C84, H87, and C157.

It belongs to the GTP cyclohydrolase I family. As to quaternary structure, toroid-shaped homodecamer, composed of two pentamers of five dimers.

The catalysed reaction is GTP + H2O = 7,8-dihydroneopterin 3'-triphosphate + formate + H(+). Its pathway is cofactor biosynthesis; 7,8-dihydroneopterin triphosphate biosynthesis; 7,8-dihydroneopterin triphosphate from GTP: step 1/1. This chain is GTP cyclohydrolase 1, found in Corynebacterium glutamicum (strain ATCC 13032 / DSM 20300 / JCM 1318 / BCRC 11384 / CCUG 27702 / LMG 3730 / NBRC 12168 / NCIMB 10025 / NRRL B-2784 / 534).